The chain runs to 338 residues: Solute-binding protein Rfer_1840 (338 aa).

Residues 1–25 form the signal peptide; it reads MQRRQLLQSMGGLAASTMPFSLAFA. Residues Arg47, Tyr100, Arg175, Ser197, 214–218, and Glu244 each bind malonate; that span reads TSSTS.

It belongs to the bacterial solute-binding protein 7 family. In terms of assembly, the complex is comprised of an extracytoplasmic solute-binding protein and a heteromeric permease formed by two transmembrane proteins.

It localises to the periplasm. Functionally, solute-binding protein that binds malonate (in vitro). Probably part of a tripartite ATP-independent periplasmic (TRAP) transport system that mediates solute transport into the cytoplasm. The chain is Solute-binding protein Rfer_1840 from Albidiferax ferrireducens (strain ATCC BAA-621 / DSM 15236 / T118) (Rhodoferax ferrireducens).